Consider the following 321-residue polypeptide: Phospho-N-acetylmuramoyl-pentapeptide-transferase (321 aa).

10 helical membrane-spanning segments follow: residues methionine 1–isoleucine 21, methionine 50–valine 70, isoleucine 76–isoleucine 96, phenylalanine 112–valine 132, isoleucine 140–tryptophan 160, glycine 176–leucine 196, alanine 200–leucine 220, valine 225–methionine 245, leucine 250–valine 270, and valine 300–valine 320.

The protein belongs to the glycosyltransferase 4 family. MraY subfamily. The cofactor is Mg(2+).

The protein resides in the cell membrane. It catalyses the reaction UDP-N-acetyl-alpha-D-muramoyl-L-alanyl-gamma-D-glutamyl-L-lysyl-D-alanyl-D-alanine + di-trans,octa-cis-undecaprenyl phosphate = Mur2Ac(oyl-L-Ala-gamma-D-Glu-L-Lys-D-Ala-D-Ala)-di-trans,octa-cis-undecaprenyl diphosphate + UMP. It participates in cell wall biogenesis; peptidoglycan biosynthesis. Its function is as follows. Catalyzes the initial step of the lipid cycle reactions in the biosynthesis of the cell wall peptidoglycan: transfers peptidoglycan precursor phospho-MurNAc-pentapeptide from UDP-MurNAc-pentapeptide onto the lipid carrier undecaprenyl phosphate, yielding undecaprenyl-pyrophosphoryl-MurNAc-pentapeptide, known as lipid I. The chain is Phospho-N-acetylmuramoyl-pentapeptide-transferase from Staphylococcus haemolyticus (strain JCSC1435).